The following is a 519-amino-acid chain: Anthranilate synthase component 1 (519 aa).

Residues Thr-40 and 293-295 each bind L-tryptophan; that span reads PYM. Position 330–331 (330–331) interacts with chorismate; that stretch reads GT. Glu-363 lines the Mg(2+) pocket. Chorismate is bound by residues Tyr-451, Arg-471, 485–487, and Gly-487; that span reads GSG. Mg(2+) is bound at residue Glu-500.

Belongs to the anthranilate synthase component I family. Heterotetramer consisting of two non-identical subunits: a beta subunit (TrpG) and a large alpha subunit (TrpE). It depends on Mg(2+) as a cofactor.

It carries out the reaction chorismate + L-glutamine = anthranilate + pyruvate + L-glutamate + H(+). It participates in amino-acid biosynthesis; L-tryptophan biosynthesis; L-tryptophan from chorismate: step 1/5. Feedback inhibited by tryptophan. Functionally, part of a heterotetrameric complex that catalyzes the two-step biosynthesis of anthranilate, an intermediate in the biosynthesis of L-tryptophan. In the first step, the glutamine-binding beta subunit (TrpG) of anthranilate synthase (AS) provides the glutamine amidotransferase activity which generates ammonia as a substrate that, along with chorismate, is used in the second step, catalyzed by the large alpha subunit of AS (TrpE) to produce anthranilate. In the absence of TrpG, TrpE can synthesize anthranilate directly from chorismate and high concentrations of ammonia. This chain is Anthranilate synthase component 1 (trpE), found in Buchnera aphidicola subsp. Diuraphis noxia.